Here is a 161-residue protein sequence, read N- to C-terminus: Large ribosomal subunit protein uL15 (161 aa).

Residues 1-39 (MTKLNELAPREGSTKGRMRVGRGPGSGKGKTAGRGVKGQ) form a disordered region. The segment covering 22 to 36 (RGPGSGKGKTAGRGV) has biased composition (gly residues).

It belongs to the universal ribosomal protein uL15 family. As to quaternary structure, part of the 50S ribosomal subunit.

In terms of biological role, binds to the 23S rRNA. In Caulobacter vibrioides (strain ATCC 19089 / CIP 103742 / CB 15) (Caulobacter crescentus), this protein is Large ribosomal subunit protein uL15.